The chain runs to 149 residues: UPF0102 protein Bpro_0391 (149 aa).

A disordered region spans residues 1 to 30 (MWFSRKQVVKPPPDGSRAQPGQVTTKSRGD).

This sequence belongs to the UPF0102 family.

This is UPF0102 protein Bpro_0391 from Polaromonas sp. (strain JS666 / ATCC BAA-500).